The sequence spans 225 residues: Phosphoserine phosphatase (225 aa).

Residue M1 is modified to N-acetylmethionine. The Nucleophile role is filled by D20. Mg(2+)-binding residues include D20 and D22. 20-22 (DVD) is a binding site for L-serine. The Proton donor role is filled by D22. O-phospho-L-serine is bound at residue M52. Phosphate is bound at residue G53. L-serine contacts are provided by residues 109–111 (SGG) and K158. Residues 109 to 111 (SGG) and K158 each bind O-phospho-L-serine. Mg(2+) is bound at residue D179. Position 182 (T182) interacts with O-phospho-L-serine. Position 182 (T182) interacts with phosphate.

This sequence belongs to the HAD-like hydrolase superfamily. SerB family. In terms of assembly, homodimer. It depends on Mg(2+) as a cofactor.

The protein localises to the cytoplasm. The protein resides in the cytosol. It catalyses the reaction O-phospho-L-serine + H2O = L-serine + phosphate. The catalysed reaction is O-phospho-D-serine + H2O = D-serine + phosphate. The protein operates within amino-acid biosynthesis; L-serine biosynthesis; L-serine from 3-phospho-D-glycerate: step 3/3. Its function is as follows. Catalyzes the last irreversible step in the biosynthesis of L-serine from carbohydrates, the dephosphorylation of O-phospho-L-serine to L-serine. L-serine can then be used in protein synthesis, to produce other amino acids, in nucleotide metabolism or in glutathione synthesis, or can be racemized to D-serine, a neuromodulator. May also act on O-phospho-D-serine. The polypeptide is Phosphoserine phosphatase (Mus musculus (Mouse)).